Here is a 121-residue protein sequence, read N- to C-terminus: Large ribosomal subunit protein bL12 (121 aa).

Belongs to the bacterial ribosomal protein bL12 family. In terms of assembly, homodimer. Part of the ribosomal stalk of the 50S ribosomal subunit. Forms a multimeric L10(L12)X complex, where L10 forms an elongated spine to which 2 to 4 L12 dimers bind in a sequential fashion. Binds GTP-bound translation factors.

In terms of biological role, forms part of the ribosomal stalk which helps the ribosome interact with GTP-bound translation factors. Is thus essential for accurate translation. The chain is Large ribosomal subunit protein bL12 from Pectobacterium atrosepticum (strain SCRI 1043 / ATCC BAA-672) (Erwinia carotovora subsp. atroseptica).